Here is an 85-residue protein sequence, read N- to C-terminus: Large ribosomal subunit protein bL27 (85 aa).

Residues 1 to 22 form a disordered region; that stretch reads MAHKKAGGSTKNGRDSESKRLG.

The protein belongs to the bacterial ribosomal protein bL27 family.

The sequence is that of Large ribosomal subunit protein bL27 from Alteromonas mediterranea (strain DSM 17117 / CIP 110805 / LMG 28347 / Deep ecotype).